Consider the following 123-residue polypeptide: Histone H2B 2 (123 aa).

Residues 1 to 32 (MAPPKPSAKGAKKAAKTVTKPKDGKKRRHARK) are disordered. Residue Ser110 is glycosylated (O-linked (GlcNAc) serine). Lys118 participates in a covalent cross-link: Glycyl lysine isopeptide (Lys-Gly) (interchain with G-Cter in ubiquitin).

It belongs to the histone H2B family. In terms of assembly, the nucleosome is a histone octamer containing two molecules each of H2A, H2B, H3 and H4 assembled in one H3-H4 heterotetramer and two H2A-H2B heterodimers. The octamer wraps approximately 147 bp of DNA. Monoubiquitination of Lys-118 gives a specific tag for epigenetic transcriptional activation and is also prerequisite for histone H3 'Lys-4' and 'Lys-79' methylation. In terms of processing, glcNAcylation at Ser-110 promotes monoubiquitination of Lys-118. It fluctuates in response to extracellular glucose, and associates with transcribed genes.

The protein localises to the nucleus. It localises to the chromosome. In terms of biological role, core component of nucleosome. Nucleosomes wrap and compact DNA into chromatin, limiting DNA accessibility to the cellular machineries which require DNA as a template. Histones thereby play a central role in transcription regulation, DNA repair, DNA replication and chromosomal stability. DNA accessibility is regulated via a complex set of post-translational modifications of histones, also called histone code, and nucleosome remodeling. The sequence is that of Histone H2B 2 (his-4) from Caenorhabditis elegans.